We begin with the raw amino-acid sequence, 446 residues long: Adenylosuccinate synthetase (446 aa).

GTP is bound by residues 20–26 (GDEGKGK) and 48–50 (GHT). The active-site Proton acceptor is the D21. 2 residues coordinate Mg(2+): D21 and G48. IMP-binding positions include 21–24 (DEGK), 46–49 (NAGH), T137, R151, Q232, T247, and R319. Catalysis depends on H49, which acts as the Proton donor. 315–321 (SVTGRPR) contributes to the substrate binding site. Residues R321, 347–349 (KLD), and 429–431 (STG) contribute to the GTP site.

Belongs to the adenylosuccinate synthetase family. As to quaternary structure, homodimer. It depends on Mg(2+) as a cofactor.

Its subcellular location is the cytoplasm. The enzyme catalyses IMP + L-aspartate + GTP = N(6)-(1,2-dicarboxyethyl)-AMP + GDP + phosphate + 2 H(+). Its pathway is purine metabolism; AMP biosynthesis via de novo pathway; AMP from IMP: step 1/2. Its function is as follows. Plays an important role in the de novo pathway of purine nucleotide biosynthesis. Catalyzes the first committed step in the biosynthesis of AMP from IMP. The polypeptide is Adenylosuccinate synthetase (Polynucleobacter necessarius subsp. necessarius (strain STIR1)).